The following is a 407-amino-acid chain: MQTLSTPSTTATEFDTVIHRRPTRSVRVGDIWIGSRHPVVVQSMINEDTLDIDGSVAAIRRLHEIGCEIVRVTVPSLGHAKAVGDIKKKLQDTYRDVPLVADVHHNGMKIALEVAKHVDKVRINPGLYVFEKPDPNRQGYTPEEFERIGKQIRDTLEPLVTSLREQDKAMRIGVNHGSLAERMLFTYGDTPEGMVESALEFLRLCEEMDFRNLVISMKASRAPVMMAAYRLMAKRMDDLGMDYPLHLGVTEAGDGDYGRIKSTVGIGTLLAEGIGDTIRVSLTEAPENEIPVCYSILQALGLRKTMVEYVACPSCGRTLFNLEEVLHKVRAATNHLVGLDIAVMGCIVNGPGEMADADYGYVGKTPGTIALYRGRDEIKRVPEEQGVEELINLIKADGRWVEPEPIA.

[4Fe-4S] cluster contacts are provided by cysteine 312, cysteine 315, cysteine 346, and glutamate 353.

It belongs to the IspG family. [4Fe-4S] cluster serves as cofactor.

The catalysed reaction is (2E)-4-hydroxy-3-methylbut-2-enyl diphosphate + 2 oxidized [2Fe-2S]-[ferredoxin] + H2O = 2-C-methyl-D-erythritol 2,4-cyclic diphosphate + 2 reduced [2Fe-2S]-[ferredoxin] + H(+). The protein operates within isoprenoid biosynthesis; isopentenyl diphosphate biosynthesis via DXP pathway; isopentenyl diphosphate from 1-deoxy-D-xylulose 5-phosphate: step 5/6. Converts 2C-methyl-D-erythritol 2,4-cyclodiphosphate (ME-2,4cPP) into 1-hydroxy-2-methyl-2-(E)-butenyl 4-diphosphate. This Synechococcus elongatus (strain ATCC 33912 / PCC 7942 / FACHB-805) (Anacystis nidulans R2) protein is 4-hydroxy-3-methylbut-2-en-1-yl diphosphate synthase (ferredoxin).